We begin with the raw amino-acid sequence, 297 residues long: tRNA(Ile)-lysidine synthase (297 aa).

An ATP-binding site is contributed by 16 to 21; sequence SGGSDS.

This sequence belongs to the tRNA(Ile)-lysidine synthase family.

Its subcellular location is the cytoplasm. The enzyme catalyses cytidine(34) in tRNA(Ile2) + L-lysine + ATP = lysidine(34) in tRNA(Ile2) + AMP + diphosphate + H(+). Functionally, ligates lysine onto the cytidine present at position 34 of the AUA codon-specific tRNA(Ile) that contains the anticodon CAU, in an ATP-dependent manner. Cytidine is converted to lysidine, thus changing the amino acid specificity of the tRNA from methionine to isoleucine. This Mesomycoplasma hyopneumoniae (strain 232) (Mycoplasma hyopneumoniae) protein is tRNA(Ile)-lysidine synthase.